The sequence spans 369 residues: C2 calcium-dependent domain-containing protein 4A (369 aa).

2 disordered regions span residues 151–176 (PRAPGPATPAAPGCPRPPQDALARRP) and 197–240 (RSRR…PFPE). Residues 153–168 (APGPATPAAPGCPRPP) show a composition bias toward pro residues. Residues 220-237 (SQSPARAPSTSPPSSRVP) are compositionally biased toward low complexity. The region spanning 253 to 369 (AGDALRLAAE…ELSLGALLLL (117 aa)) is the C2 domain.

This sequence belongs to the C2CD4 family. As to expression, specifically expressed in endothelial cells.

The protein resides in the nucleus. May be involved in inflammatory process. May regulate cell architecture and adhesion. This Homo sapiens (Human) protein is C2 calcium-dependent domain-containing protein 4A (C2CD4A).